Consider the following 153-residue polypeptide: Arachidonate 5-lipoxygenase-activating protein (153 aa).

At 1-8 (MDQEAVGN) the chain is on the lumenal side. The helical transmembrane segment at 9 to 30 (VVLLAIVTLISVVQNGFFAHKV) threads the bilayer. Residues 31–52 (EHESRNQNGRSFQRTGTLAFER) are Cytoplasmic-facing. A helical transmembrane segment spans residues 53–77 (VYTANQNCVDAYPTFLAVLWTAGLL). The Lumenal portion of the chain corresponds to 78–80 (CSQ). A helical membrane pass occupies residues 81–102 (VPAAFAGLMYLFVRQKYFVGYL). At 103-107 (GERTQ) the chain is on the cytoplasmic side. An intramembrane segment occupies 108–115 (STPGYIFG). The helical transmembrane segment at 116-128 (KRIILFLFLMSLA) threads the bilayer. Residues 129–153 (GILNYCLILLFGSDFENYIKTISTT) are Lumenal-facing.

Belongs to the MAPEG family. As to quaternary structure, homotrimer. Interacts with LTC4S and ALOX5.

The protein resides in the nucleus membrane. It localises to the endoplasmic reticulum membrane. Functionally, required for leukotriene biosynthesis by ALOX5 (5-lipoxygenase). Anchors ALOX5 to the membrane. Binds arachidonic acid, and could play an essential role in the transfer of arachidonic acid to ALOX5. Binds to MK-886, a compound that blocks the biosynthesis of leukotrienes. This Oryctolagus cuniculus (Rabbit) protein is Arachidonate 5-lipoxygenase-activating protein (ALOX5AP).